A 120-amino-acid chain; its full sequence is MNQLIIRAIEERFKKSNIPDFKPGDTVKVHVKVKEGDKERIQVFEGVVIARRGGGLRETFTVRKISFGVGVERVFPLHSPIIDKIELVRRGDVRRAKLYYLRTKKGKEAKVKEKTDYQKA.

This sequence belongs to the bacterial ribosomal protein bL19 family.

Functionally, this protein is located at the 30S-50S ribosomal subunit interface and may play a role in the structure and function of the aminoacyl-tRNA binding site. The polypeptide is Large ribosomal subunit protein bL19 (Thermodesulfovibrio yellowstonii (strain ATCC 51303 / DSM 11347 / YP87)).